The chain runs to 634 residues: Coilin (634 aa).

3 disordered regions span residues 87–135, 149–276, and 342–361; these read VSPA…IAEN, PGPS…KLSQ, and GAKS…DSTL. The segment covering 152–181 has biased composition (polar residues); sequence SVQSKLLTNKGTPKAPETQTEVSNMSANIE. Basic and acidic residues-rich tracts occupy residues 223-234 and 251-272; these read TLKEGKMSESKN and KENE…KIPD.

Belongs to the coilin family. As to expression, in egg chambers expressed in the follicle cells, nurse cells and oocyte. Expressed in the larval brain, salivary glands, fat bodies and in the somatic hub cells at the tip of the testis. Expressed in the spermatogonia and spermatocytes, and in the adult ejaculatory duct (at protein level). Expressed in the adult Malpighian tubules.

Its subcellular location is the nucleus. It localises to the nucleoplasm. The protein resides in the cajal body. It is found in the chromosome. The protein localises to the centromere. Its subcellular location is the cytoplasm. It localises to the cytoskeleton. The protein resides in the spindle. Its function is as follows. Component of nuclear coiled bodies, also known as Cajal bodies or CBs, which are involved in the modification and assembly of nucleoplasmic snRNPs. Required for Cajal body formation. The chain is Coilin from Drosophila melanogaster (Fruit fly).